We begin with the raw amino-acid sequence, 122 residues long: Large ribosomal subunit protein uL14 (122 aa).

This sequence belongs to the universal ribosomal protein uL14 family. As to quaternary structure, part of the 50S ribosomal subunit. Forms a cluster with proteins L3 and L19. In the 70S ribosome, L14 and L19 interact and together make contacts with the 16S rRNA in bridges B5 and B8.

Its function is as follows. Binds to 23S rRNA. Forms part of two intersubunit bridges in the 70S ribosome. This Paracoccus denitrificans (strain Pd 1222) protein is Large ribosomal subunit protein uL14.